The primary structure comprises 310 residues: tRNA uridine(34) hydroxylase (310 aa).

The Rhodanese domain maps to 134-232 (DDPDTLLIDT…YFEEVSQSES (99 aa)). The active-site Cysteine persulfide intermediate is Cys-192.

This sequence belongs to the TrhO family.

The catalysed reaction is uridine(34) in tRNA + AH2 + O2 = 5-hydroxyuridine(34) in tRNA + A + H2O. Catalyzes oxygen-dependent 5-hydroxyuridine (ho5U) modification at position 34 in tRNAs. The sequence is that of tRNA uridine(34) hydroxylase from Prochlorococcus marinus (strain MIT 9303).